A 601-amino-acid polypeptide reads, in one-letter code: ATP-dependent lipid A-core flippase (601 aa).

The next 4 helical transmembrane spans lie at 27–47 (IGLF…QPML), 83–103 (LLIV…NYFL), 174–194 (LLWM…LIAV), and 267–287 (PLLQ…VLYL). The region spanning 31-322 (LISIVGFLIF…LSEVSSTIQK (292 aa)) is the ABC transmembrane type-1 domain. The ABC transporter domain occupies 354–590 (LEVRNLSFTY…NGYYSRLHAM (237 aa)). Residue 388 to 395 (GRSGSGKS) participates in ATP binding.

Belongs to the ABC transporter superfamily. Lipid exporter (TC 3.A.1.106) family. In terms of assembly, homodimer.

Its subcellular location is the cell inner membrane. The enzyme catalyses ATP + H2O + lipid A-core oligosaccharideSide 1 = ADP + phosphate + lipid A-core oligosaccharideSide 2.. Functionally, involved in lipopolysaccharide (LPS) biosynthesis. Translocates lipid A-core from the inner to the outer leaflet of the inner membrane. Transmembrane domains (TMD) form a pore in the inner membrane and the ATP-binding domain (NBD) is responsible for energy generation. In Pseudomonas fluorescens (strain ATCC BAA-477 / NRRL B-23932 / Pf-5), this protein is ATP-dependent lipid A-core flippase.